Here is a 263-residue protein sequence, read N- to C-terminus: MPTSIKAIKESLEAVTSLLDPLFQELATDTRSGVQKALKSRQKAIQADLAEEERLEAMLSYEKALYKEGYQAIAGIDEVGRGPLAGPVVAACVILPQHCKIKGLNDSKKIPKAKHETIYQAVKEKALAIGIGIIDNQLIDEVNIYEATKLAMLEAIKQLEGQLTQPDYLLIDAMTLDIAISQQSILKGDANSLSIAAASIVAKVTRDQMMANYDRIFPGYGFAKNAGYGTKEHLQELKAYGITPIHRKSFEPVKSMCCDSTNP.

The region spanning 71 to 262 (QAIAGIDEVG…VKSMCCDSTN (192 aa)) is the RNase H type-2 domain. 3 residues coordinate a divalent metal cation: D77, E78, and D172.

This sequence belongs to the RNase HII family. It depends on Mn(2+) as a cofactor. Mg(2+) is required as a cofactor.

It is found in the cytoplasm. The enzyme catalyses Endonucleolytic cleavage to 5'-phosphomonoester.. Functionally, endonuclease that specifically degrades the RNA of RNA-DNA hybrids. The protein is Ribonuclease HII of Streptococcus pyogenes serotype M3 (strain ATCC BAA-595 / MGAS315).